The sequence spans 309 residues: Homoserine O-succinyltransferase (309 aa).

The active-site Acyl-thioester intermediate is cysteine 142. Residues lysine 163 and serine 192 each contribute to the substrate site. The Proton acceptor role is filled by histidine 235. Glutamate 237 is an active-site residue. Substrate is bound at residue arginine 249.

This sequence belongs to the MetA family. As to quaternary structure, homodimer.

It is found in the cytoplasm. It catalyses the reaction L-homoserine + succinyl-CoA = O-succinyl-L-homoserine + CoA. It functions in the pathway amino-acid biosynthesis; L-methionine biosynthesis via de novo pathway; O-succinyl-L-homoserine from L-homoserine: step 1/1. Its function is as follows. Transfers a succinyl group from succinyl-CoA to L-homoserine, forming succinyl-L-homoserine. The protein is Homoserine O-succinyltransferase of Escherichia coli O127:H6 (strain E2348/69 / EPEC).